The following is a 261-amino-acid chain: Putative cytochrome YdhU (261 aa).

A helical membrane pass occupies residues 25-45; sequence FWPVWLIIAGVLLVGMWLVLG. His-77 contacts heme b. The next 3 helical transmembrane spans lie at 81–101, 108–128, and 182–202; these read ALLF…MVGA, VAVH…FVLI, and VAYV…GLLC. Residue His-111 coordinates heme b. Heme b is bound by residues His-223 and His-237. Residues 224–244 form a helical membrane-spanning segment; sequence FALAFISLFFIFGHLYLCTTG. His-237 contributes to the a menaquinone binding site.

It belongs to the PhsC family. It depends on heme as a cofactor.

The protein resides in the cell inner membrane. In Escherichia coli (strain K12), this protein is Putative cytochrome YdhU (ydhU).